The following is a 480-amino-acid chain: MVKEPNGVTRTMRRIRRIHFVGIGGAGMCGIAEVLLNLGYEVSGSDLKASAVTERLEKFGAQIFIGHQAENADGADVLVVSSAINRANPEVASALERRIPVVPRAEMLAELMRYRHGIAVAGTHGKTTTTSLIASVFAAGGLDPTFVIGGRLNAAGTNAQLGASRYLVAEADESDASFLHLQPMVAVVTNIDADHMATYGGDFNKLKKTFVEFLHNLPFYGLAVMCVDDPVVREILPQIARPTVTYGLSEDADVRAINIRQEGMRTWFTVLRPEREPLDVSVNMPGLHNVLNSLATIVIATDEGISDEAIVQGLSGFQGVGRRFQVYGELQVEGGSVMLVDDYGHHPREVAAVIKAIRGGWPERRLVMVYQPHRYTRTRDLYEDFVQVLGEANVLLLMEVYPAGEEPIPGADSRQLCHSIRQRGQLDPIYFERDADLAPLVKPLLRAGDILLCQGAGDVGGLAPQLIRNPLFAGKGGKGA.

ATP is bound at residue 122-128 (GTHGKTT).

The protein belongs to the MurCDEF family.

It is found in the cytoplasm. It carries out the reaction UDP-N-acetyl-alpha-D-muramate + L-alanine + ATP = UDP-N-acetyl-alpha-D-muramoyl-L-alanine + ADP + phosphate + H(+). It functions in the pathway cell wall biogenesis; peptidoglycan biosynthesis. Functionally, cell wall formation. The chain is UDP-N-acetylmuramate--L-alanine ligase from Pseudomonas paraeruginosa (strain DSM 24068 / PA7) (Pseudomonas aeruginosa (strain PA7)).